A 178-amino-acid polypeptide reads, in one-letter code: Large ribosomal subunit protein uL6 (178 aa).

The protein belongs to the universal ribosomal protein uL6 family. As to quaternary structure, part of the 50S ribosomal subunit.

In terms of biological role, this protein binds to the 23S rRNA, and is important in its secondary structure. It is located near the subunit interface in the base of the L7/L12 stalk, and near the tRNA binding site of the peptidyltransferase center. The polypeptide is Large ribosomal subunit protein uL6 (Francisella tularensis subsp. novicida (strain U112)).